Here is a 956-residue protein sequence, read N- to C-terminus: Valine--tRNA ligase (956 aa).

The short motif at 69-79 is the 'HIGH' region element; that stretch reads PNITGVLHMGH. The 'KMSKS' region signature appears at 566-570; the sequence is KMSKS. Lys569 provides a ligand contact to ATP. A coiled-coil region spans residues 885 to 911; sequence LCARLQKAWQKARQKVQQVERKLADAQ.

Belongs to the class-I aminoacyl-tRNA synthetase family. ValS type 1 subfamily. As to quaternary structure, monomer.

The protein resides in the cytoplasm. The catalysed reaction is tRNA(Val) + L-valine + ATP = L-valyl-tRNA(Val) + AMP + diphosphate. Functionally, catalyzes the attachment of valine to tRNA(Val). As ValRS can inadvertently accommodate and process structurally similar amino acids such as threonine, to avoid such errors, it has a 'posttransfer' editing activity that hydrolyzes mischarged Thr-tRNA(Val) in a tRNA-dependent manner. This chain is Valine--tRNA ligase, found in Treponema pallidum (strain Nichols).